The following is a 126-amino-acid chain: Holo-[acyl-carrier-protein] synthase (126 aa).

The Mg(2+) site is built by aspartate 9 and glutamate 58.

The protein belongs to the P-Pant transferase superfamily. AcpS family. Mg(2+) is required as a cofactor.

Its subcellular location is the cytoplasm. The enzyme catalyses apo-[ACP] + CoA = holo-[ACP] + adenosine 3',5'-bisphosphate + H(+). Its function is as follows. Transfers the 4'-phosphopantetheine moiety from coenzyme A to a Ser of acyl-carrier-protein. The sequence is that of Holo-[acyl-carrier-protein] synthase from Aliivibrio fischeri (strain MJ11) (Vibrio fischeri).